A 182-amino-acid chain; its full sequence is Large ribosomal subunit protein bL25 (182 aa).

The protein belongs to the bacterial ribosomal protein bL25 family. CTC subfamily. In terms of assembly, part of the 50S ribosomal subunit; part of the 5S rRNA/L5/L18/L25 subcomplex. Contacts the 5S rRNA. Binds to the 5S rRNA independently of L5 and L18.

Functionally, this is one of the proteins that binds to the 5S RNA in the ribosome where it forms part of the central protuberance. The polypeptide is Large ribosomal subunit protein bL25 (Borrelia turicatae (strain 91E135)).